The primary structure comprises 82 residues: Sulfur carrier protein TusA (82 aa).

The Cysteine persulfide intermediate role is filled by Cys19.

Belongs to the sulfur carrier protein TusA family. In terms of assembly, interacts with IscS.

The protein resides in the cytoplasm. Its pathway is tRNA modification. In terms of biological role, sulfur carrier protein involved in sulfur trafficking in the cell. Part of a sulfur-relay system required for 2-thiolation during synthesis of 2-thiouridine of the modified wobble base 5-methylaminomethyl-2-thiouridine (mnm(5)s(2)U) in tRNA. Interacts with IscS and stimulates its cysteine desulfurase activity. Accepts an activated sulfur from IscS, which is then transferred to TusD, and thus determines the direction of sulfur flow from IscS to 2-thiouridine formation. Also appears to be involved in sulfur transfer for the biosynthesis of molybdopterin. This Edwardsiella ictaluri (strain 93-146) protein is Sulfur carrier protein TusA.